A 264-amino-acid chain; its full sequence is Tritrans,polycis-undecaprenyl-diphosphate synthase (geranylgeranyl-diphosphate specific) (264 aa).

Residue Asp-43 is part of the active site. Residue Asp-43 coordinates Mg(2+). Substrate is bound by residues 44–47, Trp-48, His-60, and 88–90; these read GNRR and STE. The Proton acceptor role is filled by Asn-91. Substrate contacts are provided by residues Phe-92, Arg-94, Arg-213, and 219–221; that span reads RIS. Residue Glu-232 coordinates Mg(2+).

This sequence belongs to the UPP synthase family. In terms of assembly, homodimer. The cofactor is Mg(2+).

The catalysed reaction is geranylgeranyl diphosphate + 7 isopentenyl diphosphate = tri-trans,hepta-cis-undecaprenyl diphosphate + 7 diphosphate. Its function is as follows. Catalyzes the sequential condensation of isopentenyl diphosphate (IPP) with geranylgeranyl diphosphate (GGPP) to yield (2Z,6Z,10Z,14Z,18Z,22Z,26Z,30E,34E,38E)-undecaprenyl diphosphate (tritrans,heptacis-UPP). It is probably the precursor of glycosyl carrier lipids. This is Tritrans,polycis-undecaprenyl-diphosphate synthase (geranylgeranyl-diphosphate specific) from Pyrococcus horikoshii (strain ATCC 700860 / DSM 12428 / JCM 9974 / NBRC 100139 / OT-3).